We begin with the raw amino-acid sequence, 178 residues long: Flagellar transcriptional regulator FlhC (178 aa).

C138, C141, C158, and C161 together coordinate Zn(2+).

The protein belongs to the FlhC family. In terms of assembly, heterohexamer composed of two FlhC and four FlhD subunits. Each FlhC binds a FlhD dimer, forming a heterotrimer, and a hexamer assembles by dimerization of two heterotrimers. The cofactor is Zn(2+).

It localises to the cytoplasm. Functions in complex with FlhD as a master transcriptional regulator that regulates transcription of several flagellar and non-flagellar operons by binding to their promoter region. Activates expression of class 2 flagellar genes, including fliA, which is a flagellum-specific sigma factor that turns on the class 3 genes. Also regulates genes whose products function in a variety of physiological pathways. This chain is Flagellar transcriptional regulator FlhC, found in Erwinia tasmaniensis (strain DSM 17950 / CFBP 7177 / CIP 109463 / NCPPB 4357 / Et1/99).